A 407-amino-acid polypeptide reads, in one-letter code: Putative aspartate aminotransferase, cytoplasmic 2 (407 aa).

The residue at position 249 (lysine 249) is an N6-(pyridoxal phosphate)lysine.

This sequence belongs to the class-I pyridoxal-phosphate-dependent aminotransferase family. As to quaternary structure, homodimer. Requires pyridoxal 5'-phosphate as cofactor.

The protein resides in the cytoplasm. The enzyme catalyses L-aspartate + 2-oxoglutarate = oxaloacetate + L-glutamate. The protein is Putative aspartate aminotransferase, cytoplasmic 2 (GOT1L1) of Bos taurus (Bovine).